The chain runs to 218 residues: 1-Cys peroxiredoxin PER1 (218 aa).

A Thioredoxin domain is found at 4–164 (LTIGDTVPNL…VVRAVDSLLT (161 aa)). Catalysis depends on Cys-46, which acts as the Cysteine sulfenic acid (-SOH) intermediate. A Bipartite nuclear localization signal motif is present at residues 194 to 217 (KKMFPQGFETADLPSKKGYLRFTK).

Belongs to the peroxiredoxin family. Prx6 subfamily.

It is found in the nucleus. Its subcellular location is the cytoplasm. It catalyses the reaction a hydroperoxide + [thioredoxin]-dithiol = an alcohol + [thioredoxin]-disulfide + H2O. Its function is as follows. Thiol-specific peroxidase that catalyzes the reduction of hydrogen peroxide and organic hydroperoxides to water and alcohols, respectively. Seems to contribute to the inhibition of germination during stress. This chain is 1-Cys peroxiredoxin PER1 (PER1), found in Triticum aestivum (Wheat).